The chain runs to 268 residues: 4-hydroxy-tetrahydrodipicolinate reductase (268 aa).

Residues 7–12 and glutamate 33 contribute to the NAD(+) site; that span reads GAGGRM. NADP(+) is bound at residue arginine 34. Residues 97–99 and 121–124 each bind NAD(+); these read GTT and SGNM. The active-site Proton donor/acceptor is the histidine 155. Position 156 (histidine 156) interacts with (S)-2,3,4,5-tetrahydrodipicolinate. Residue lysine 159 is the Proton donor of the active site. 165–166 is a (S)-2,3,4,5-tetrahydrodipicolinate binding site; the sequence is GT.

This sequence belongs to the DapB family.

The protein localises to the cytoplasm. The catalysed reaction is (S)-2,3,4,5-tetrahydrodipicolinate + NAD(+) + H2O = (2S,4S)-4-hydroxy-2,3,4,5-tetrahydrodipicolinate + NADH + H(+). It carries out the reaction (S)-2,3,4,5-tetrahydrodipicolinate + NADP(+) + H2O = (2S,4S)-4-hydroxy-2,3,4,5-tetrahydrodipicolinate + NADPH + H(+). Its pathway is amino-acid biosynthesis; L-lysine biosynthesis via DAP pathway; (S)-tetrahydrodipicolinate from L-aspartate: step 4/4. Catalyzes the conversion of 4-hydroxy-tetrahydrodipicolinate (HTPA) to tetrahydrodipicolinate. The chain is 4-hydroxy-tetrahydrodipicolinate reductase from Brucella abortus (strain 2308).